A 127-amino-acid chain; its full sequence is Small ribosomal subunit protein uS12 (127 aa).

Asp-89 is modified (3-methylthioaspartic acid). Positions 102-127 are disordered; it reads LDTAGVKDRKQGRSKYGTKRPKEAKK. Positions 113–127 are enriched in basic residues; the sequence is GRSKYGTKRPKEAKK.

The protein belongs to the universal ribosomal protein uS12 family. Part of the 30S ribosomal subunit. Contacts proteins S8 and S17. May interact with IF1 in the 30S initiation complex.

In terms of biological role, with S4 and S5 plays an important role in translational accuracy. Interacts with and stabilizes bases of the 16S rRNA that are involved in tRNA selection in the A site and with the mRNA backbone. Located at the interface of the 30S and 50S subunits, it traverses the body of the 30S subunit contacting proteins on the other side and probably holding the rRNA structure together. The combined cluster of proteins S8, S12 and S17 appears to hold together the shoulder and platform of the 30S subunit. The chain is Small ribosomal subunit protein uS12 from Nostoc punctiforme (strain ATCC 29133 / PCC 73102).